The sequence spans 3416 residues: Genome polyprotein (3416 aa).

Residues 1-34 (MAKGAVLKGKGGGPPRRVPKETAKKTRQGPGRLP) are disordered. At 1 to 99 (MAKGAVLKGK…NRRRGKRRST (99 aa)) the chain is on the cytoplasmic side. The propeptide at 97 to 117 (RSTTGLLTSILLACLATLVIS) is ER anchor for the capsid protein C, removed in mature form by serine protease NS3. Residues 100–120 (TGLLTSILLACLATLVISATI) traverse the membrane as a helical segment. The Extracellular segment spans residues 121–243 (RRERTGDMVI…HLTRVEGWVW (123 aa)). Asn145 is a glycosylation site (N-linked (GlcNAc...) asparagine; by host). Residues 244 to 261 (KNKLLTMAFCAVVWMVTD) form a helical membrane-spanning segment. Residue Ser262 is a topological domain, cytoplasmic. Residues 263-281 (LPTRFIVITVALCLAPTYA) traverse the membrane as a helical segment. At 282 to 728 (TRCTHLQNRD…HTAFGAAFNT (447 aa)) the chain is on the extracellular side. Intrachain disulfides connect Cys284/Cys311, Cys341/Cys397, Cys341/Cys402, Cys355/Cys386, Cys373/Cys397, and Cys373/Cys402. A fusion peptide region spans residues 379 to 392 (DRGWGNHCGLFGKG). N-linked (GlcNAc...) asparagine; by host glycosylation occurs at Asn435. Intrachain disulfides connect Cys467–Cys571 and Cys588–Cys619. The helical transmembrane segment at 729-749 (IFGGVGFLPRILLGVALAWLG) threads the bilayer. At 750 to 756 (LNSRNPT) the chain is on the cytoplasmic side. The helical transmembrane segment at 757-777 (LSVGFLITGGLVLTMTLGVGA) threads the bilayer. Over 778–1134 (DMGCAIDANR…RSMVLADNGA (357 aa)) the chain is Extracellular. Cystine bridges form between Cys781–Cys792, Cys832–Cys922, Cys957–Cys1002, Cys1059–Cys1108, Cys1070–Cys1092, and Cys1091–Cys1095. N-linked (GlcNAc...) asparagine; by host glycosylation is found at Asn862, Asn985, and Asn1001. The helical transmembrane segment at 1135–1155 (MLSEGGVPGIVAVFVVLELVI) threads the bilayer. Topologically, residues 1156 to 1162 (RRRPTTG) are cytoplasmic. A helical membrane pass occupies residues 1163–1183 (TSVVWCGVVVLGLVVTGLVTI). Residues 1184-1189 (EGLCRY) lie on the Lumenal side of the membrane. A helical transmembrane segment spans residues 1190–1210 (VVAVGILMSMELGPEIVALVL). The Cytoplasmic segment spans residues 1211–1235 (LQAVFDMRTGLLVAFAVKRAYTTRE). A helical transmembrane segment spans residues 1236-1256 (AVVTYFLLLVLELGFPEASLS). Topologically, residues 1257 to 1295 (NIWKWADSLAMGTLILQACSQEGRARVGYLLAAMMTQKD) are lumenal. A helical transmembrane segment spans residues 1296-1316 (MAIIHTGLTIFLSAATAMAVW). Topologically, residues 1317 to 1361 (SMIKGQRDQKGLSWATPLVGLFGGEGVGLRLLAFRRLAERRNRRS) are cytoplasmic. A helical membrane pass occupies residues 1362–1379 (FSEPLTVVGVMLTVASGM). The Lumenal segment spans residues 1380–1384 (VRHTS). A helical transmembrane segment spans residues 1385–1405 (QEALCALVAGAFLLLMMVLGT). At 1406 to 1458 (RKMQLIAEWCGEVEWNPDLVNEGGEVNLKVRQDAMGNLHLTEVEKEERAMALW) the chain is on the cytoplasmic side. The tract at residues 1412-1451 (AEWCGEVEWNPDLVNEGGEVNLKVRQDAMGNLHLTEVEKE) is interacts with and activates NS3 protease. Residues 1459-1479 (LLAGLVASAFHWAGILIVLAI) constitute an intramembrane region (helical). Residues 1480–2162 (WTFFEMLSSG…RMAERDAPEA (683 aa)) lie on the Cytoplasmic side of the membrane. The 180-residue stretch at 1492 to 1671 (SELVFSGQGT…EAEKSRPELP (180 aa)) folds into the Peptidase S7 domain. Catalysis depends on charge relay system; for serine protease NS3 activity residues His1545, Asp1569, and Ser1629. The Helicase ATP-binding domain maps to 1677–1833 (TGWMSKGQIT…ESNGAIMSEE (157 aa)). Residue 1690–1697 (MHPGSGKT) participates in ATP binding. The DEAH box signature appears at 1781 to 1784 (DEAH). The Helicase C-terminal domain maps to 1844–2002 (GFDWITEYEG…TLRGPVATFY (159 aa)). Lys1885 carries the N6-acetyllysine; by host modification. Residues 2163–2183 (FLTIVEVAVLGVATLGILWCF) form a helical membrane-spanning segment. At 2184-2191 (VARTSVSR) the chain is on the lumenal side. The segment at residues 2192–2211 (MFLGTVVLFAALLLLWIGGV) is an intramembrane region (helical). Residue Asp2212 is a topological domain, lumenal. Residues 2213–2233 (YGYMAGIALIFYIFLTVLQPE) traverse the membrane as a helical segment. Residues 2234–2246 (PGKQRSSDDNRLA) are Cytoplasmic-facing. The chain crosses the membrane as a helical span at residues 2247 to 2267 (YFLLGLLSLAGLVTANEMGML). The Lumenal segment spans residues 2268 to 2301 (DKTKADLAGLMWHGEQRHPAWEEWTNVDIQPARS). The helical intramembrane region spans 2302 to 2322 (WGTYVLIVSLFTPYMLHQLQT). The Lumenal portion of the chain corresponds to 2323–2345 (KIQQLVNSSVASGAQAMRDLGGG). The segment at residues 2346–2366 (TPFFGVAGHVIALGVTSLVGA) is an intramembrane region (helical). Residues 2367 to 2368 (TP) lie on the Lumenal side of the membrane. A helical transmembrane segment spans residues 2369 to 2389 (LSLGLGVALAAFHLAIVASGL). The Cytoplasmic portion of the chain corresponds to 2390 to 2432 (EAELTQRAHRVFFSAMVKNPMVDGDVINPFPDGEPKPVLYERR). The helical transmembrane segment at 2433–2453 (MSLILAIALCMVSVVLNRTAA) threads the bilayer. Topologically, residues 2454-2476 (SMTEAGAVGLAALGQLVHPETET) are lumenal. The chain crosses the membrane as a helical span at residues 2477 to 2497 (LWTMPMACGMAGLVRGSFWGL). Residues 2498–3416 (LPMGHRLWLK…WDLKLESNII (919 aa)) lie on the Cytoplasmic side of the membrane. One can recognise an mRNA cap 0-1 NS5-type MT domain in the interval 2514–2778 (GGADGETLGD…EVDLGTGTRC (265 aa)). S-adenosyl-L-methionine is bound at residue Ser2569. Ser2569 bears the Phosphoserine mark. Catalysis depends on Lys2574, which acts as the For 2'-O-MTase activity. The S-adenosyl-L-methionine site is built by Gly2599, Trp2600, Thr2617, Ile2618, Asp2644, and Val2645. The active-site For 2'-O-MTase activity is the Asp2659. S-adenosyl-L-methionine is bound at residue Ile2660. Catalysis depends on for 2'-O-MTase activity residues Lys2696 and Glu2732. An interaction with host SCRIB region spans residues 2732–2736 (EMYFS). Tyr2734 serves as a coordination point for S-adenosyl-L-methionine. Zn(2+) contacts are provided by Glu2952, His2956, Cys2961, and Cys2964. The 150-residue stretch at 3042-3191 (GLFYADDTAG…RPIDDRFGKA (150 aa)) folds into the RdRp catalytic domain. Residues His3226, Cys3242, and Cys3361 each coordinate Zn(2+).

This sequence in the N-terminal section; belongs to the class I-like SAM-binding methyltransferase superfamily. mRNA cap 0-1 NS5-type methyltransferase family. As to quaternary structure, homodimer. Interacts (via N-terminus) with host EXOC1 (via C-terminus); this interaction results in EXOC1 degradation through the proteasome degradation pathway. Forms heterodimers with envelope protein E in the endoplasmic reticulum and Golgi. In terms of assembly, homodimer; in the endoplasmic reticulum and Golgi. Interacts with protein prM. Interacts with non-structural protein 1. As to quaternary structure, homodimer; Homohexamer when secreted. Interacts with envelope protein E. Interacts (via N-terminus) with serine protease NS3. In terms of assembly, forms a heterodimer with serine protease NS3. May form homooligomers. As to quaternary structure, forms a heterodimer with NS2B. Interacts with NS4B. Interacts with unphosphorylated RNA-directed RNA polymerase NS5; this interaction stimulates RNA-directed RNA polymerase NS5 guanylyltransferase activity. Interacts with serine protease NS3. In terms of assembly, homodimer. Interacts with host STAT2; this interaction inhibits the phosphorylation of the latter, and, when all viral proteins are present (polyprotein), targets STAT2 for degradation. Interacts with serine protease NS3. Specific enzymatic cleavages in vivo yield mature proteins. Cleavages in the lumen of endoplasmic reticulum are performed by host signal peptidase, whereas cleavages in the cytoplasmic side are performed by serine protease NS3. Signal cleavage at the 2K-4B site requires a prior NS3 protease-mediated cleavage at the 4A-2K site. In terms of processing, cleaved in post-Golgi vesicles by a host furin, releasing the mature small envelope protein M, and peptide pr. This cleavage is incomplete as up to 30% of viral particles still carry uncleaved prM. Post-translationally, N-glycosylated. N-glycosylated. The excreted form is glycosylated and this is required for efficient secretion of the protein from infected cells. In terms of processing, acetylated by host KAT5. Acetylation modulates NS3 RNA-binding and unwinding activities and plays an important positive role for viral replication. Post-translationally, phosphorylated on serines residues. This phosphorylation may trigger NS5 nuclear localization.

It localises to the virion. It is found in the host nucleus. The protein resides in the host cytoplasm. Its subcellular location is the host perinuclear region. The protein localises to the secreted. It localises to the virion membrane. It is found in the host endoplasmic reticulum membrane. It carries out the reaction Selective hydrolysis of -Xaa-Xaa-|-Yaa- bonds in which each of the Xaa can be either Arg or Lys and Yaa can be either Ser or Ala.. It catalyses the reaction RNA(n) + a ribonucleoside 5'-triphosphate = RNA(n+1) + diphosphate. The enzyme catalyses a ribonucleoside 5'-triphosphate + H2O = a ribonucleoside 5'-diphosphate + phosphate + H(+). The catalysed reaction is ATP + H2O = ADP + phosphate + H(+). It carries out the reaction a 5'-end (5'-triphosphoguanosine)-ribonucleoside in mRNA + S-adenosyl-L-methionine = a 5'-end (N(7)-methyl 5'-triphosphoguanosine)-ribonucleoside in mRNA + S-adenosyl-L-homocysteine. It catalyses the reaction a 5'-end (N(7)-methyl 5'-triphosphoguanosine)-ribonucleoside in mRNA + S-adenosyl-L-methionine = a 5'-end (N(7)-methyl 5'-triphosphoguanosine)-(2'-O-methyl-ribonucleoside) in mRNA + S-adenosyl-L-homocysteine + H(+). Its function is as follows. Plays a role in virus budding by binding to the cell membrane and gathering the viral RNA into a nucleocapsid that forms the core of a mature virus particle. During virus entry, may induce genome penetration into the host cytoplasm after hemifusion induced by the surface proteins. Can migrate to the cell nucleus where it modulates host functions. Functionally, inhibits RNA silencing by interfering with host Dicer. Prevents premature fusion activity of envelope proteins in trans-Golgi by binding to envelope protein E at pH6.0. After virion release in extracellular space, gets dissociated from E dimers. In terms of biological role, acts as a chaperone for envelope protein E during intracellular virion assembly by masking and inactivating envelope protein E fusion peptide. prM is the only viral peptide matured by host furin in the trans-Golgi network probably to avoid catastrophic activation of the viral fusion activity in acidic Golgi compartment prior to virion release. prM-E cleavage is inefficient, and many virions are only partially matured. These uncleaved prM would play a role in immune evasion. Its function is as follows. May play a role in virus budding. Exerts cytotoxic effects by activating a mitochondrial apoptotic pathway through M ectodomain. May display a viroporin activity. Functionally, binds to host cell surface receptor and mediates fusion between viral and cellular membranes. Envelope protein is synthesized in the endoplasmic reticulum in the form of heterodimer with protein prM. They play a role in virion budding in the ER, and the newly formed immature particle is covered with 60 spikes composed of heterodimer between precursor prM and envelope protein E. The virion is transported to the Golgi apparatus where the low pH causes dissociation of PrM-E heterodimers and formation of E homodimers. prM-E cleavage is inefficient, and many virions are only partially matured. These uncleaved prM would play a role in immune evasion. Involved in immune evasion, pathogenesis and viral replication. Once cleaved off the polyprotein, is targeted to three destinations: the viral replication cycle, the plasma membrane and the extracellular compartment. Essential for viral replication. Required for formation of the replication complex and recruitment of other non-structural proteins to the ER-derived membrane structures. Excreted as a hexameric lipoparticle that plays a role against host immune response. Antagonizing the complement function. Binds to the host macrophages and dendritic cells. Inhibits signal transduction originating from Toll-like receptor 3 (TLR3). In terms of biological role, component of the viral RNA replication complex that functions in virion assembly and antagonizes the host immune response. Its function is as follows. Required cofactor for the serine protease function of NS3. May have membrane-destabilizing activity and form viroporins. Functionally, displays three enzymatic activities: serine protease, NTPase and RNA helicase. NS3 serine protease, in association with NS2B, performs its autocleavage and cleaves the polyprotein at dibasic sites in the cytoplasm: C-prM, NS2A-NS2B, NS2B-NS3, NS3-NS4A, NS4A-2K and NS4B-NS5. NS3 RNA helicase binds RNA and unwinds dsRNA in the 3' to 5' direction. Regulates the ATPase activity of the NS3 helicase activity. NS4A allows NS3 helicase to conserve energy during unwinding. In terms of biological role, functions as a signal peptide for NS4B and is required for the interferon antagonism activity of the latter. Its function is as follows. Induces the formation of ER-derived membrane vesicles where the viral replication takes place. Inhibits interferon (IFN)-induced host STAT1 phosphorylation and nuclear translocation, thereby preventing the establishment of cellular antiviral state by blocking the IFN-alpha/beta pathway. Inhibits STAT2 translocation in the nucleus after IFN-alpha treatment. Functionally, replicates the viral (+) and (-) RNA genome, and performs the capping of genomes in the cytoplasm. NS5 methylates viral RNA cap at guanine N-7 and ribose 2'-O positions. Besides its role in RNA genome replication, also prevents the establishment of cellular antiviral state by blocking the interferon-alpha/beta (IFN-alpha/beta) signaling pathway. Inhibits host TYK2 and STAT2 phosphorylation, thereby preventing activation of JAK-STAT signaling pathway. The sequence is that of Genome polyprotein from Homo sapiens (Human).